The following is a 196-amino-acid chain: Imidazole glycerol phosphate synthase subunit HisH (196 aa).

Residues 2–196 (KVVILDTGCA…AQLLKNFLEM (195 aa)) enclose the Glutamine amidotransferase type-1 domain. The active-site Nucleophile is the Cys77. Catalysis depends on residues His178 and Glu180.

In terms of assembly, heterodimer of HisH and HisF.

Its subcellular location is the cytoplasm. It catalyses the reaction 5-[(5-phospho-1-deoxy-D-ribulos-1-ylimino)methylamino]-1-(5-phospho-beta-D-ribosyl)imidazole-4-carboxamide + L-glutamine = D-erythro-1-(imidazol-4-yl)glycerol 3-phosphate + 5-amino-1-(5-phospho-beta-D-ribosyl)imidazole-4-carboxamide + L-glutamate + H(+). The enzyme catalyses L-glutamine + H2O = L-glutamate + NH4(+). Its pathway is amino-acid biosynthesis; L-histidine biosynthesis; L-histidine from 5-phospho-alpha-D-ribose 1-diphosphate: step 5/9. Its function is as follows. IGPS catalyzes the conversion of PRFAR and glutamine to IGP, AICAR and glutamate. The HisH subunit catalyzes the hydrolysis of glutamine to glutamate and ammonia as part of the synthesis of IGP and AICAR. The resulting ammonia molecule is channeled to the active site of HisF. This is Imidazole glycerol phosphate synthase subunit HisH from Pectobacterium atrosepticum (strain SCRI 1043 / ATCC BAA-672) (Erwinia carotovora subsp. atroseptica).